Consider the following 388-residue polypeptide: MTSVSLGMPSAPPPVLAPRRKTRQIKVGSVGVGSDSPISVQSMTTTPTTDINATLQQIAELTASGCDIVRVACPSADDAEALPIIARKSQIPVIADIHFQPKYVFAAIEAGCAAVRVNPGNIRKFDDQVKEIARAAKDHGTSIRIGVNAGSLEPGILKKYGKATPEALVESAVWEASLFEEHGFHDFKISVKHNDPVIMVAAYEMLAEKGDWPLHLGVTEAGPAFQGTIKSATAFGALLSRGIGDTIRVSLSAPPVEEIKVGNQILQSLNLRPRKLEIVSCPSCGRAQVDVYTLAEQVTAGLEGMEIPLRVAVMGCVVNGPGEAREADLGVASGNGKGQIFVKGEVIKTVPESEIVETLIEEAMRIAEEMGEADGEDAVKGSPVVSVS.

Residues Cys281, Cys284, Cys316, and Glu323 each coordinate [4Fe-4S] cluster.

Belongs to the IspG family. The cofactor is [4Fe-4S] cluster.

It carries out the reaction (2E)-4-hydroxy-3-methylbut-2-enyl diphosphate + oxidized [flavodoxin] + H2O + 2 H(+) = 2-C-methyl-D-erythritol 2,4-cyclic diphosphate + reduced [flavodoxin]. The protein operates within isoprenoid biosynthesis; isopentenyl diphosphate biosynthesis via DXP pathway; isopentenyl diphosphate from 1-deoxy-D-xylulose 5-phosphate: step 5/6. In terms of biological role, converts 2C-methyl-D-erythritol 2,4-cyclodiphosphate (ME-2,4cPP) into 1-hydroxy-2-methyl-2-(E)-butenyl 4-diphosphate. This Arthrobacter sp. (strain FB24) protein is 4-hydroxy-3-methylbut-2-en-1-yl diphosphate synthase (flavodoxin).